Reading from the N-terminus, the 452-residue chain is Plasminogen-binding protein PgbA (452 aa).

Positions 265 to 452 are disordered; that stretch reads QEAIKEPKKA…RRKALEAGKK (188 aa). Composition is skewed to basic and acidic residues over residues 284-310 and 317-373; these read LEEK…DERK and KAME…KEPS. Positions 374–391 are enriched in polar residues; the sequence is DGNNATQQGEKQNAPKEN. The segment covering 392 to 452 has biased composition (basic and acidic residues); the sequence is NAQKEENKPN…RRKALEAGKK (61 aa).

It is found in the cell surface. Functionally, binds plasminogen, specifically, and in a concentration and lysine-dependent manner. Plasminogen is the precursor of plasmin, a serine protease that cleaves fibrin, fibronectin, laminin and vitronectin. Acquisition of plasminogen/plasmin could enable H.pylori to degrade host components. The sequence is that of Plasminogen-binding protein PgbA (pgbA) from Helicobacter pylori (strain ATCC 700392 / 26695) (Campylobacter pylori).